Reading from the N-terminus, the 321-residue chain is Tetraacyldisaccharide 4'-kinase (321 aa).

S54–T61 is a binding site for ATP.

It belongs to the LpxK family.

The enzyme catalyses a lipid A disaccharide + ATP = a lipid IVA + ADP + H(+). It functions in the pathway glycolipid biosynthesis; lipid IV(A) biosynthesis; lipid IV(A) from (3R)-3-hydroxytetradecanoyl-[acyl-carrier-protein] and UDP-N-acetyl-alpha-D-glucosamine: step 6/6. Its function is as follows. Transfers the gamma-phosphate of ATP to the 4'-position of a tetraacyldisaccharide 1-phosphate intermediate (termed DS-1-P) to form tetraacyldisaccharide 1,4'-bis-phosphate (lipid IVA). This Rickettsia rickettsii protein is Tetraacyldisaccharide 4'-kinase.